The chain runs to 529 residues: Peptide chain release factor 3 (529 aa).

The region spanning 11–280 (SKRRTFAIIS…GLTDWAPAPL (270 aa)) is the tr-type G domain. Residues 20–27 (SHPDAGKT), 88–92 (DTPGH), and 142–145 (NKLD) each bind GTP.

This sequence belongs to the TRAFAC class translation factor GTPase superfamily. Classic translation factor GTPase family. PrfC subfamily.

It localises to the cytoplasm. Functionally, increases the formation of ribosomal termination complexes and stimulates activities of RF-1 and RF-2. It binds guanine nucleotides and has strong preference for UGA stop codons. It may interact directly with the ribosome. The stimulation of RF-1 and RF-2 is significantly reduced by GTP and GDP, but not by GMP. The protein is Peptide chain release factor 3 of Vibrio vulnificus (strain CMCP6).